The following is a 615-amino-acid chain: Probable methylmalonyl-CoA mutase small subunit (615 aa).

Belongs to the methylmalonyl-CoA mutase family. In terms of assembly, heterodimer of an alpha and a beta chain. Adenosylcob(III)alamin serves as cofactor.

The catalysed reaction is (R)-methylmalonyl-CoA = succinyl-CoA. The protein operates within metabolic intermediate metabolism; propanoyl-CoA degradation; succinyl-CoA from propanoyl-CoA: step 3/3. In terms of biological role, catalyzes the isomerization of succinyl-CoA to methylmalonyl-CoA during synthesis of propionate from tricarboxylic acid-cycle intermediates. The polypeptide is Probable methylmalonyl-CoA mutase small subunit (mutA) (Mycobacterium bovis (strain ATCC BAA-935 / AF2122/97)).